Here is a 72-residue protein sequence, read N- to C-terminus: Large ribosomal subunit protein uL29 (72 aa).

Belongs to the universal ribosomal protein uL29 family.

This Chlamydia trachomatis serovar L2 (strain ATCC VR-902B / DSM 19102 / 434/Bu) protein is Large ribosomal subunit protein uL29.